The following is a 667-amino-acid chain: MDPSRSRSGGSGEESSFQENERRWQQERLHREEAYYQFINELSDEDYRLMRDHNLLGTPGEITSEELQQRLERAKEQLASQPGSDSAASDGDSESLRAHSDEDSLLRWLNTFRRTGNVTRSGQNGNQSWRAVSRTNPNSGEFGFSLEIHINPDNRGSEMHGEDSTDIPLSGVNREHRQQRPSSPVARRTRSQTSMSSSGPRGRRGARRQGSVQGSFATLGRLRNGIGVALGVPRVSAPRTNVINSHTNQSDGSTLRQGGRQRFGAAHIWENGARSNVTVRNTNQRLEPIRLRPAFSSRSRSPIQRQNGTVHHNSQRQGRPVQQTGRNRSVRHRGVTRVFLEQGREHRGTDYTPLSNSRLVSRITVEEGESSRSSAATQRHPAITLDLQVRRIRPGETRDRDSIANRTRSRAGLAESTVESTSGGFHRTISHLERSGVRTYVSTITVPLRRISENDVVEPSSVALRSILRQIMTGFGELSSLMEVEPASENQSNGQRLPEVYLELSNGDAADDSGQHGRASSQASQAQDGAEMLAVREPAPPQARPSGSRSRRQLGRADSVVEAGTLPILRLAHFFLLNEGDDDPIRGLTKEQIDNLSTRSYEQDGVDSELGKVCSVCISDYVAGNKLRQLPCLHEFHIHCIDRWLSENCTCPVCRRPVLEFGATSSG.

Disordered regions lie at residues 1–25 (MDPS…RRWQ), 75–100 (KEQL…RAHS), 116–216 (GNVT…QGSF), 295–355 (FSSR…TPLS), 396–419 (ETRD…STVE), 507–532 (GDAA…GAEM), and 537–556 (EPAP…QLGR). Low complexity predominate over residues 79-90 (ASQPGSDSAASD). The segment covering 116–139 (GNVTRSGQNGNQSWRAVSRTNPNS) has biased composition (polar residues). Residues 150–163 (INPDNRGSEMHGED) show a composition bias toward basic and acidic residues. Positions 191–200 (SQTSMSSSGP) are enriched in low complexity. Over residues 296–327 (SSRSRSPIQRQNGTVHHNSQRQGRPVQQTGRN) the composition is skewed to polar residues. The segment covering 516–530 (HGRASSQASQAQDGA) has biased composition (low complexity). A Phosphoserine modification is found at serine 559. An RING-type; atypical zinc finger spans residues 614–655 (CSVCISDYVAGNKLRQLPCLHEFHIHCIDRWLSENCTCPVCR).

The protein belongs to the RNF12 family. In terms of tissue distribution, widely expressed with higher expression in the testis in both germ cells and Sertoli cells.

The protein resides in the nucleus. Its subcellular location is the cytoplasm. It is found in the cell projection. It localises to the axon. The protein localises to the PML body. The enzyme catalyses S-ubiquitinyl-[E2 ubiquitin-conjugating enzyme]-L-cysteine + [acceptor protein]-L-lysine = [E2 ubiquitin-conjugating enzyme]-L-cysteine + N(6)-ubiquitinyl-[acceptor protein]-L-lysine.. Its pathway is protein modification; protein ubiquitination. In terms of biological role, E3 ubiquitin-protein ligase mediating 'Lys-48'-linked polyubiquitination of LIMK1 and its subsequent targeting to the proteasome for degradation. Negatively regulates axonal outgrowth through regulation of the LIMK1 turnover. Mediates 'Lys-6' and 'Lys-27'-linked polyubiquitination of AR/androgen receptor thereby modulating its transcriptional activity. May also bind DNA and function as a transcriptional regulator. Mediates polyubiquitination of QKI in macrophages, leading to its degradation. The sequence is that of E3 ubiquitin-protein ligase RNF6 from Mus musculus (Mouse).